The sequence spans 204 residues: AFG2-interacting ribosome maturation factor (204 aa).

As to quaternary structure, part of the 55LCC heterohexameric ATPase complex. Does not associate with pre-60S ribosomal particles.

Its subcellular location is the nucleus. The protein localises to the cytoplasm. Functionally, part of the 55LCC heterohexameric ATPase complex which is chromatin-associated and promotes replisome proteostasis to maintain replication fork progression and genome stability. Required for replication fork progression, sister chromatid cohesion, and chromosome stability. The ATPase activity is specifically enhanced by replication fork DNA and is coupled to cysteine protease-dependent cleavage of replisome substrates in response to replication fork damage. Uses ATPase activity to process replisome substrates in S-phase, facilitating their proteolytic turnover from chromatin to ensure DNA replication and mitotic fidelity. Involved in the cytoplasmic maturation steps of pre-60S ribosomal particles by promoting the release of shuttling protein RSL24D1/RLP24 from the pre-ribosomal particles. In Xenopus tropicalis (Western clawed frog), this protein is AFG2-interacting ribosome maturation factor (airim).